The chain runs to 338 residues: RNA 3'-terminal phosphate cyclase (338 aa).

ATP-binding positions include Gln103 and Tyr283 to Gln287. His308 serves as the catalytic Tele-AMP-histidine intermediate.

Belongs to the RNA 3'-terminal cyclase family. Type 1 subfamily.

It is found in the cytoplasm. The enzyme catalyses a 3'-end 3'-phospho-ribonucleotide-RNA + ATP = a 3'-end 2',3'-cyclophospho-ribonucleotide-RNA + AMP + diphosphate. Catalyzes the conversion of 3'-phosphate to a 2',3'-cyclic phosphodiester at the end of RNA. The mechanism of action of the enzyme occurs in 3 steps: (A) adenylation of the enzyme by ATP; (B) transfer of adenylate to an RNA-N3'P to produce RNA-N3'PP5'A; (C) and attack of the adjacent 2'-hydroxyl on the 3'-phosphorus in the diester linkage to produce the cyclic end product. The biological role of this enzyme is unknown but it is likely to function in some aspects of cellular RNA processing. This Escherichia coli O9:H4 (strain HS) protein is RNA 3'-terminal phosphate cyclase.